The primary structure comprises 243 residues: Cell division protein ZipA (243 aa).

Residues 1 to 4 (MSDM) lie on the Periplasmic side of the membrane. Residues 5–25 (AMIRIGILIAGLLLVAAIFLF) traverse the membrane as a helical segment. Residues 26–243 (GRPKKSPQGR…APPLTKSPRW (218 aa)) are Cytoplasmic-facing. A disordered region spans residues 30–89 (KSPQGRRVDKDEGQPRERREPVISSEFGVEDDAAERAEGVEQSELNLEGQDASGGNEVGK). Residues 35-50 (RRVDKDEGQPRERREP) are compositionally biased toward basic and acidic residues.

This sequence belongs to the ZipA family. As to quaternary structure, interacts with FtsZ via their C-terminal domains.

Its subcellular location is the cell inner membrane. Its function is as follows. Essential cell division protein that stabilizes the FtsZ protofilaments by cross-linking them and that serves as a cytoplasmic membrane anchor for the Z ring. Also required for the recruitment to the septal ring of downstream cell division proteins. The protein is Cell division protein ZipA of Xanthomonas euvesicatoria pv. vesicatoria (strain 85-10) (Xanthomonas campestris pv. vesicatoria).